The primary structure comprises 163 residues: Staphylokinase (163 aa).

The first 27 residues, 1-27, serve as a signal peptide directing secretion; that stretch reads MLKRSLLFLTVLLLLFSFSSITNEVSA.

Belongs to the staphylokinase family.

The protein resides in the secreted. Its function is as follows. Potent plasminogen activator that converts plasminogen into plasmin. It forms a 1:1 complex with plasmin, which in turn activates other plasminogen molecules. In Staphylococcus phage S phi-C (Bacteriophage S phi-C), this protein is Staphylokinase.